The chain runs to 466 residues: Ceramide glucosyltransferase 1 (466 aa).

The chain crosses the membrane as a helical span at residues 70–90; that stretch reads LALSGCIFVSVLYLVHIIAFF. Residue D148 is a short sequence motif, D1. A short sequence motif (D2) is located at residue D200. A short sequence motif (D3) is located at residue D294. D294 serves as the catalytic Proton acceptor. The (Q/R)XXRW motif lies at 330-334; the sequence is RIGRW. The next 2 membrane-spanning stretches (helical) occupy residues 354–374 and 403–423; these read CVTSGLIMAFGLNYLGGYSVY and TPFLFVFIWLFREFTSPFIFI.

The protein belongs to the glycosyltransferase 2 family. Expressed in excretory canals, pharyngeal intestinal valve, intestine and intestinal rectal valve.

It localises to the membrane. It catalyses the reaction an N-acylsphing-4-enine + UDP-alpha-D-glucose = a beta-D-glucosyl-(1&lt;-&gt;1')-N-acylsphing-4-enine + UDP + H(+). The catalysed reaction is an N-acyl-15-methylhexadecasphing-4-enine + UDP-alpha-D-glucose = an N-acyl-1-beta-D-glucosyl-15-methylhexadecasphing-4-enine + UDP + H(+). The protein operates within lipid metabolism; sphingolipid metabolism. Functionally, catalyzes the first glycosylation step in glycosphingolipid biosynthesis, the transfer of glucose to ceramide to produce glucosylceramides (GlcCer). GlcCer are known to contribute to the physical properties and physiological functions of membranes and may regulate signal transduction. Only branched-chain sphingoid bases like 15-methylhexadecasphing-4-enine are used for generating complex sphingolipids in Caenorhabditis elegans. Together with cgt-3, plays a role in the trafficking of proteins such as mig-14 to the cell membrane in intestinal cells. This Caenorhabditis elegans protein is Ceramide glucosyltransferase 1.